The primary structure comprises 109 residues: Protein FAM32A-like (109 aa).

Residues 1–48 (MSEYKSVQKGSLKLKGVSLPSKKKKKKNKEMKRLEEQVLTSENEEGTK) are disordered. The span at 9-20 (KGSLKLKGVSLP) shows a compositional bias: low complexity. Residues 21 to 30 (SKKKKKKNKE) show a composition bias toward basic residues.

The protein belongs to the FAM32 family.

It is found in the nucleus. May induce G2 arrest and apoptosis. May also increase cell sensitivity to apoptotic stimuli. The protein is Protein FAM32A-like (fam32al) of Danio rerio (Zebrafish).